The following is a 143-amino-acid chain: Putative mediator of RNA polymerase II transcription subunit 11 (143 aa).

Positions 97-143 form a coiled coil; the sequence is ILSHLEDLNNIVENNQEKQEKEKQEKEKLEKEKLEKEKQQSNEMNID. Residues 109-143 form a disordered region; it reads ENNQEKQEKEKQEKEKLEKEKLEKEKQQSNEMNID. The span at 111-136 shows a compositional bias: basic and acidic residues; the sequence is NQEKQEKEKQEKEKLEKEKLEKEKQQ.

Belongs to the Mediator complex subunit 11 family. As to quaternary structure, component of the Mediator complex.

Its subcellular location is the nucleus. Functionally, component of the Mediator complex, a coactivator involved in the regulated transcription of nearly all RNA polymerase II-dependent genes. Mediator functions as a bridge to convey information from gene-specific regulatory proteins to the basal RNA polymerase II transcription machinery. Mediator is recruited to promoters by direct interactions with regulatory proteins and serves as a scaffold for the assembly of a functional pre-initiation complex with RNA polymerase II and the general transcription factors. In Dictyostelium discoideum (Social amoeba), this protein is Putative mediator of RNA polymerase II transcription subunit 11 (med11).